The chain runs to 2201 residues: RNA-directed RNA polymerase L (2201 aa).

Positions 26-285 (KNIMLAQTQI…VCSKSVEYTF (260 aa)) are endonuclease. Glu51, Asp88, and Glu101 together coordinate Mn(2+). Lys114 is an active-site residue. Positions 1156–1352 (LDMKSVVRQS…FLSDRLNKFV (197 aa)) constitute a RdRp catalytic domain. Asp1312 provides a ligand contact to Mg(2+).

Belongs to the Bunyavirales RNA polymerase family. As to quaternary structure, homomultimer; the oligomeric structure is essential for the polymerase activity. Interacts with nucleoprotein N. Interacts with protein Z; this interaction inhibits viral transcription and replication, Z partially blocks the product exit tunnel for the releasing nascent RNA product. The cofactor is Mn(2+). It depends on Mg(2+) as a cofactor.

It is found in the virion. It localises to the host cytoplasm. The catalysed reaction is RNA(n) + a ribonucleoside 5'-triphosphate = RNA(n+1) + diphosphate. In terms of biological role, RNA-dependent RNA polymerase, which is responsible for the replication and transcription of the viral RNA genome using antigenomic RNA as an intermediate. During transcription, synthesizes subgenomic RNAs and assures their capping by a cap-snatching mechanism, which involves the endonuclease activity cleaving the host capped pre-mRNAs. These short capped RNAs are then used as primers for viral transcription. The 3'-end of subgenomic mRNAs molecules are heterogeneous and not polyadenylated. The replicase function is to direct synthesis of antigenomic and genomic RNA which are encapsidated and non capped. As a consequence of the use of the same enzyme for both transcription and replication, these mechanisms need to be well coordinated. These processes may be regulated by proteins N and Z in a dose-dependent manner. Z protein inhibits the viral polymerase L und thus the viral transcription and RNA synthesis. The protein is RNA-directed RNA polymerase L of Oecomys bicolor (Bicolored arboreal rice rat).